The primary structure comprises 185 residues: Peptidyl-tRNA hydrolase (185 aa).

Residue tyrosine 14 coordinates tRNA. The active-site Proton acceptor is the histidine 19. The tRNA site is built by tyrosine 65, asparagine 67, and asparagine 113.

It belongs to the PTH family. Monomer.

The protein localises to the cytoplasm. It catalyses the reaction an N-acyl-L-alpha-aminoacyl-tRNA + H2O = an N-acyl-L-amino acid + a tRNA + H(+). Functionally, hydrolyzes ribosome-free peptidyl-tRNAs (with 1 or more amino acids incorporated), which drop off the ribosome during protein synthesis, or as a result of ribosome stalling. Its function is as follows. Catalyzes the release of premature peptidyl moieties from peptidyl-tRNA molecules trapped in stalled 50S ribosomal subunits, and thus maintains levels of free tRNAs and 50S ribosomes. This chain is Peptidyl-tRNA hydrolase, found in Rickettsia africae (strain ESF-5).